Reading from the N-terminus, the 286-residue chain is Beta-lactamase SHV-3 (286 aa).

A signal peptide spans 1-21 (MRYIRLCIISLLATLPLAVHA). Serine 66 acts as the Acyl-ester intermediate in catalysis. Cysteine 73 and cysteine 119 are oxidised to a cystine. The active-site Proton acceptor is glutamate 164. 230-232 (KTG) provides a ligand contact to substrate.

It belongs to the class-A beta-lactamase family.

It catalyses the reaction a beta-lactam + H2O = a substituted beta-amino acid. This enzyme hydrolyzes cefotaxime, ceftazidime and other broad spectrum cephalosporins. This is Beta-lactamase SHV-3 (bla) from Klebsiella pneumoniae.